The sequence spans 513 residues: MKHNEVFGWTLKVLSFLLVVIPANALDKHGWRKQSIYSLLTDRFASTNPKPCNPEDREYCGGNWRGIIDKLDYIQGMGFTAIWISPIIKNIEGRTKYGEAYHGYWPQDLYTLNPHFGTEQDLIDLADALHDRGMYLMVDTVVNHMGSSDPRNIDYGIYRPFNQSSHYHPMCPIEQDKPLSLEQCWIGTEDMTLPDIDTENPQIIETLYNFIHDQVKQFKIDGLRVDATKHVRRTFWPGFCESAGVYCQGEEWTGQADLFCEWQEYMDGLHNFPVQGVAAESVIPLNDRALRKTAIAMNLVAHHCKDSTLLGLFLESQDAPRLAALNNDYTVLKNAMTLNLMSDGIPIVFYGQEQMFNGSHDPVNRPALWDQGYNTDGPLYQYTSKVNKIRRDLINSEDGEIYIRSITHAIMIGDHVMVMYKGPVITFITNYGAVDKEYLIKMPGSETMIDLLTCTLIEVEGEVMRTSIKKGEPKILYPYQLAFRDGFCQEQITLQEIDDVFMGRNEINGPDRK.

The signal sequence occupies residues Met1–Ala25. Cys52 and Cys60 form a disulfide bridge. Position 105 (Trp105) interacts with substrate. Position 143 (Asn143) interacts with Ca(2+). His144 contributes to the substrate binding site. Asn162 carries N-linked (GlcNAc...) asparagine glycosylation. Cys171 and Cys184 form a disulfide bridge. The Ca(2+) site is built by Glu182 and Asp195. Residue Arg224 participates in substrate binding. Ca(2+) contacts are provided by Asp226, His230, and Glu250. Asp226 acts as the Nucleophile in catalysis. Residue Lys229–His230 coordinates substrate. The active-site Proton donor is the Glu250. Residue Gly254 participates in substrate binding. Cys260 and Cys304 are joined by a disulfide. Asp318 contributes to the substrate binding site. Asn357 carries an N-linked (GlcNAc...) asparagine glycan. Arg365 contributes to the substrate binding site. Cys454 and Cys488 form a disulfide bridge.

Belongs to the glycosyl hydrolase 13 family. The cofactor is Ca(2+).

It localises to the endoplasmic reticulum. It catalyses the reaction Endohydrolysis of (1-&gt;4)-alpha-D-glucosidic linkages in polysaccharides containing three or more (1-&gt;4)-alpha-linked D-glucose units.. The chain is Alpha-amylase mde5 (mde5) from Schizosaccharomyces pombe (strain 972 / ATCC 24843) (Fission yeast).